A 779-amino-acid chain; its full sequence is Putative helicase V13 (779 aa).

Positions 477-642 constitute an SF3 helicase domain; it reads DNPKPFITSL…FVKEEELNEK (166 aa). 504–511 contacts ATP; sequence GKSNAGKS.

The chain is Putative helicase V13 from Acanthamoeba polyphaga (Amoeba).